A 906-amino-acid chain; its full sequence is Cadherin-2 (906 aa).

The signal sequence occupies residues 1–25 (MCRIAGGPRTLLPLLAALLQASLEA). Residues 26–159 (SGELALCKTG…HSGALQRQKR (134 aa)) constitute a propeptide that is removed on maturation. At serine 96 the chain carries Phosphoserine. 5 consecutive Cadherin domains span residues 160–267 (DWVI…RPEF), 268–382 (LHQV…PPEF), 383–497 (TAMT…NPYF), 498–603 (APNP…DNAP), and 604–717 (QVLP…RIVG). At 160-724 (DWVIPPINLP…IVGAGLGTGT (565 aa)) the chain is on the extracellular side. Glutamate 170 is a Ca(2+) binding site. The N-linked (GlcNAc...) asparagine glycan is linked to asparagine 190. Ca(2+)-binding residues include aspartate 226, glutamate 228, aspartate 259, methionine 260, asparagine 261, aspartate 262, and asparagine 263. Asparagine 273 is a glycosylation site (N-linked (GlcNAc...) asparagine). Positions 293, 295, and 301 each coordinate Ca(2+). Asparagine 325 is a glycosylation site (N-linked (GlcNAc...) asparagine). Residue aspartate 353 participates in Ca(2+) binding. Asparagine 402, asparagine 572, asparagine 622, asparagine 651, and asparagine 692 each carry an N-linked (GlcNAc...) asparagine glycan. A helical membrane pass occupies residues 725 to 745 (IIAILLCIIILLILVLMFVVW). The Cytoplasmic portion of the chain corresponds to 746–906 (MKRRDKERQA…LADMYGGGDD (161 aa)). Positions 863–880 (SGSTAGSLSSLNSSSSGG) are enriched in low complexity. A disordered region spans residues 863–883 (SGSTAGSLSSLNSSSSGGDQD).

As to quaternary structure, homodimer (via extracellular region). Can also form heterodimers with other cadherins (via extracellular region). Dimerization occurs in trans, i.e. with a cadherin chain from another cell. Interacts with PCDH8; this complex may also include TAOK2. The interaction with PCDH8 may lead to internalization through TAOK2/p38 MAPK pathway. Identified in a complex containing FGFR4, NCAM1, CDH2, PLCG1, FRS2, SRC, SHC1, GAP43 and CTTN. May interact with OBSCN (via protein kinase domain 2). Interacts with FBXO45. Post-translationally, cleaved by MMP24. Ectodomain cleavage leads to the generation of a soluble 90 kDa N-terminal soluble fragment and a 45 kDa membrane-bound C-terminal fragment 1 (CTF1), which is further cleaved by gamma-secretase into a 35 kDa. Cleavage in neural stem cells by MMP24 affects CDH2-mediated anchorage of neural stem cells to ependymocytes in the adult subependymal zone, leading to modulate neural stem cell quiescence. In terms of processing, may be phosphorylated by OBSCN. In terms of tissue distribution, in testis, expressed in Sertoli and germ cells.

Its subcellular location is the cell membrane. The protein localises to the sarcolemma. The protein resides in the cell junction. It localises to the cell surface. It is found in the desmosome. Its subcellular location is the adherens junction. Calcium-dependent cell adhesion protein; preferentially mediates homotypic cell-cell adhesion by dimerization with a CDH2 chain from another cell. Cadherins may thus contribute to the sorting of heterogeneous cell types. Acts as a regulator of neural stem cells quiescence by mediating anchorage of neural stem cells to ependymocytes in the adult subependymal zone: upon cleavage by MMP24, CDH2-mediated anchorage is affected, leading to modulate neural stem cell quiescence. Plays a role in cell-to-cell junction formation between pancreatic beta cells and neural crest stem (NCS) cells, promoting the formation of processes by NCS cells. Required for proper neurite branching. Required for pre- and postsynaptic organization. CDH2 may be involved in neuronal recognition mechanism. In hippocampal neurons, may regulate dendritic spine density. This chain is Cadherin-2 (Cdh2), found in Rattus norvegicus (Rat).